Consider the following 151-residue polypeptide: UPF0178 protein Tcr_1995 (151 aa).

The segment at 116-135 (RSSGVDTGGPPPLNQKDRQA) is disordered.

It belongs to the UPF0178 family.

This chain is UPF0178 protein Tcr_1995, found in Hydrogenovibrio crunogenus (strain DSM 25203 / XCL-2) (Thiomicrospira crunogena).